The primary structure comprises 179 residues: MKLSFSLCIFFFNLLLLLQAVISADIVQGTCKKVAQRSPNVNYDFCVKSLGADPKSHTADLQGLGVISANLAIQHGSKIQTFIGRILKSKVDPALKKYLNDCVGLYADAKSSVQEAIADFKSKDYASANVKMSAALDDSVTCEDGFKEKKGIVSPVTKENKDYVQLTAISLAITKLLGA.

An N-terminal signal peptide occupies residues methionine 1–serine 23. 2 cysteine pairs are disulfide-bonded: cysteine 31-cysteine 46 and cysteine 102-cysteine 142.

Belongs to the PMEI family. As to quaternary structure, monomer. Not glycosylated. As to expression, expressed in pollen (at protein level). Expressed in stem, but not leaves (at protein level). Expressed in pollen.

It is found in the secreted. It localises to the cell wall. Its subcellular location is the endoplasmic reticulum. In terms of biological role, invertase inhibitor. The polypeptide is Putative invertase inhibitor (Platanus acerifolia (London plane tree)).